The sequence spans 400 residues: MLNVFFLTSLFYAASATTYVTTNNHIEMPIYQKRPLSEQMEMIDILDLGDRPRRQAEPNLHNSASKFLLEVYNEISEDQEPKEVLHQRHKRSLDDDILISNEDRQEIASCNSILTFSSRLKPEQLDNELDMHITFNTNDVPVDLSLVQAMLRIYKQPSLVDRRANFTVSVYRKLDNRQDFSYRILGSVNTTSSQRGWLEFNLTDTLRYWLHNKGLQRRNELRISIGDSQLSTFAAGLVTPQASRTSLEPFIVGYFNGPELLVKIQKLRFKRDLEKRRAGGGSPPPPPPPPVDLYRPPQSCERLNFTVDFKELHMHNWVIAPKKFEAYFCGGGCNFPLGTKMNATNHAIVQTLMHLKQPHLPKPCCVPTVLGAITILRYLNEDIIDLTKYQKAVAKECGCH.

An N-terminal signal peptide occupies residues 1 to 16 (MLNVFFLTSLFYAASA). Residues 17–277 (TTYVTTNNHI…RFKRDLEKRR (261 aa)) constitute a propeptide that is removed on maturation. Residues Asn165, Asn189, Asn201, Asn304, and Asn342 are each glycosylated (N-linked (GlcNAc...) asparagine). 3 disulfide bridges follow: Cys300–Cys365, Cys329–Cys397, and Cys333–Cys399.

This sequence belongs to the TGF-beta family. In terms of assembly, heterodimers of scw/dpp are the active subunit, dpp/dpp homodimers elicit a basal response and scw/scw homodimers alone are ineffective in specifying a dorsal pattern. As to expression, ubiquitously expressed during early stages of embryogenesis, but the effect on development appears graded and is restricted to the dorsal side of the embryo.

The protein localises to the secreted. In terms of biological role, part of the signal that specifies dorsal cell fates in the embryo. Acts together with dpp. The polypeptide is Protein screw (scw) (Drosophila melanogaster (Fruit fly)).